The sequence spans 239 residues: Probable transcriptional regulatory protein Sca_0317 (239 aa).

Belongs to the TACO1 family. YeeN subfamily.

It localises to the cytoplasm. The protein is Probable transcriptional regulatory protein Sca_0317 of Staphylococcus carnosus (strain TM300).